Consider the following 262-residue polypeptide: 5'-nucleotidase SurE (262 aa).

4 residues coordinate a divalent metal cation: Asp-11, Asp-12, Ser-43, and Asn-101.

This sequence belongs to the SurE nucleotidase family. The cofactor is a divalent metal cation.

Its subcellular location is the cytoplasm. It carries out the reaction a ribonucleoside 5'-phosphate + H2O = a ribonucleoside + phosphate. Functionally, nucleotidase that shows phosphatase activity on nucleoside 5'-monophosphates. In Prochlorococcus marinus (strain NATL2A), this protein is 5'-nucleotidase SurE.